A 149-amino-acid polypeptide reads, in one-letter code: Antitoxin HigA1 (149 aa).

The 55-residue stretch at 42-96 folds into the HTH cro/C1-type domain; that stretch reads LIALRKHCQLSQVEVAKRMGVRQPTVSGFEKEPSDPKLSTLQRYARALDARLRLV. The segment at residues 53 to 72 is a DNA-binding region (H-T-H motif); that stretch reads QVEVAKRMGVRQPTVSGFEK.

Interacts with SecB-like chaperone MT2006.

In terms of biological role, antitoxin component of an atypical, type II toxin-antitoxin chaperone (TAC) system. Probably neutralizes the toxic effects of cognate toxin HigB1, which also requires SecB-like chaperone MT2006 (AC Q7D7P7). Autorepresses its operon (higB1-higA1-MT2006). In Mycobacterium tuberculosis (strain CDC 1551 / Oshkosh), this protein is Antitoxin HigA1.